Reading from the N-terminus, the 86-residue chain is Small ribosomal subunit protein bS20 (86 aa).

The interval 1–26 (MANIKSAKKRALQSEKSRKHNASRRT) is disordered.

Belongs to the bacterial ribosomal protein bS20 family.

In terms of biological role, binds directly to 16S ribosomal RNA. The polypeptide is Small ribosomal subunit protein bS20 (Psychromonas ingrahamii (strain DSM 17664 / CCUG 51855 / 37)).